The following is a 662-amino-acid chain: Pollen receptor-like kinase 1 (662 aa).

Residues 1–31 (MPPMQARTLSVYNVMVPLVCLLLFFSTPTHG) form the signal peptide. Residues 32–256 (LSDSEAILKF…ARPKSSSRGP (225 aa)) are Extracellular-facing. LRR repeat units follow at residues 79-98 (QMENLELSGSIDIEALSGLT), 99-121 (SLRTLSFMNNKFEGPFPDFKKLA), 122-144 (ALKSLYLSNNQFGGDIPGDAFEG), 147-169 (WLKKVHLAQNKFTGQIPSSVAKL), 171-191 (KLLELRLDGNQFTGEIPEFEH), and 192-214 (QLHLLNLSNNALTGPIPESLSMT). N-linked (GlcNAc...) asparagine glycosylation is present at N197. The interval 233–253 (ECDSPYIEHPPQSEARPKSSS) is disordered. Residues 257–277 (LVITAIVAALTILIILGVIFL) form a helical membrane-spanning segment. The Cytoplasmic portion of the chain corresponds to 278–662 (LNRSYKNKKP…GESCESISFA (385 aa)). The interval 288–330 (RLAVETGPSSLQKKTGIREADQSRRDRKKADHRKGSGTTKRMG) is disordered. In terms of domain architecture, Protein kinase spans 357–639 (KASAEILGSG…EREGDDDDFY (283 aa)). S359 is modified (phosphoserine). Residues 363–371 (LGSGCFGAS) and K385 contribute to the ATP site. S437 carries the post-translational modification Phosphoserine. At T457 the chain carries Phosphothreonine. Position 527 is a phosphotyrosine (Y527). The interval 636-662 (DDFYSTYVSETDGRSSKGESCESISFA) is disordered. Residues 646-655 (TDGRSSKGES) show a composition bias toward basic and acidic residues.

It belongs to the protein kinase superfamily. Ser/Thr protein kinase family. In terms of assembly, interacts in vitro with ROPGEF1 (via PRONE domain). As to expression, expressed in pollen and/or in flowers, but not in leaves.

It localises to the cell membrane. The enzyme catalyses L-seryl-[protein] + ATP = O-phospho-L-seryl-[protein] + ADP + H(+). It carries out the reaction L-threonyl-[protein] + ATP = O-phospho-L-threonyl-[protein] + ADP + H(+). In terms of biological role, receptor-like kinase involved in the control of pollen germination and pollen tube polar growth. This chain is Pollen receptor-like kinase 1, found in Arabidopsis thaliana (Mouse-ear cress).